Consider the following 676-residue polypeptide: Envelope glycoprotein (676 aa).

Positions Met1 to Ser34 are cleaved as a signal peptide. A receptor-binding domain (RBD) region spans residues Ala35–Pro270. At Ala35–Leu620 the chain is on the extracellular side. The N-linked (GlcNAc...) asparagine; by host glycan is linked to Asn46. Disulfide bonds link Cys80–Cys132, Cys106–Cys121, Cys107–Cys117, Cys155–Cys175, and Cys167–Cys180. A Zn(2+)-binding site is contributed by His89. Asp120 contacts Zn(2+). An N-linked (GlcNAc...) asparagine; by host glycan is attached at Asn202. An intrachain disulfide couples Cys212 to Cys218. A disordered region spans residues Asn287 to Asp322. Over residues Lys294 to Pro308 the composition is skewed to low complexity. Residues Ser309–Ala318 are compositionally biased toward pro residues. The N-linked (GlcNAc...) asparagine; by host glycan is linked to Asn336. 6 disulfides stabilise this stretch: Cys346/Cys349, Cys346/Cys573, Cys376/Cys430, Cys395/Cys407, Cys437/Cys450, and Cys565/Cys572. The CXXC signature appears at Cys346–Cys349. N-linked (GlcNAc...) asparagine; by host glycosylation is found at Asn368 and Asn375. N-linked (GlcNAc...) asparagine; by host glycosylation is found at Asn408 and Asn444. The interval Val482–Val502 is fusion peptide. Residues Gln513–Val547 are a coiled coil. The immunosuppression stretch occupies residues Leu548–Leu564. Positions Cys565–Cys573 match the CX6CC motif. A helical transmembrane segment spans residues Ile621–Ile641. Cys640 is lipidated: S-palmitoyl cysteine; by host. Over Leu642 to Gln676 the chain is Cytoplasmic. Positions Tyr665–Leu668 match the YXXL motif; contains endocytosis signal motif.

In terms of assembly, the mature envelope protein (Env) consists of a trimer of SU-TM heterodimers attached by a labile interchain disulfide bond. Post-translationally, specific enzymatic cleavages in vivo yield mature proteins. Envelope glycoproteins are synthesized as an inactive precursor that is N-glycosylated and processed likely by host cell furin or by a furin-like protease in the Golgi to yield the mature SU and TM proteins. The cleavage site between SU and TM requires the minimal sequence [KR]-X-[KR]-R. The R-peptide is released from the C-terminus of the cytoplasmic tail of the TM protein upon particle formation as a result of proteolytic cleavage by the viral protease. Cleavage of this peptide is required for TM to become fusogenic. The CXXC motif is highly conserved across a broad range of retroviral envelope proteins. It is thought to participate in the formation of a labile disulfide bond possibly with the CX6CC motif present in the transmembrane protein. Isomerization of the intersubunit disulfide bond to an SU intrachain disulfide bond is thought to occur upon receptor recognition in order to allow membrane fusion. In terms of processing, the transmembrane protein is palmitoylated. Post-translationally, the R-peptide is palmitoylated.

It localises to the virion membrane. The protein resides in the host cell membrane. The surface protein (SU) attaches the virus to the host cell by binding to its receptor. This interaction triggers the refolding of the transmembrane protein (TM) and is thought to activate its fusogenic potential by unmasking its fusion peptide. Fusion occurs at the host cell plasma membrane. Functionally, the transmembrane protein (TM) acts as a class I viral fusion protein. Under the current model, the protein has at least 3 conformational states: pre-fusion native state, pre-hairpin intermediate state, and post-fusion hairpin state. During viral and target cell membrane fusion, the coiled coil regions (heptad repeats) assume a trimer-of-hairpins structure, positioning the fusion peptide in close proximity to the C-terminal region of the ectodomain. The formation of this structure appears to drive apposition and subsequent fusion of viral and target cell membranes. Membranes fusion leads to delivery of the nucleocapsid into the cytoplasm. This Mus musculus (Mouse) protein is Envelope glycoprotein (env).